Reading from the N-terminus, the 370-residue chain is 3-isopropylmalate dehydrogenase (370 aa).

77-90 provides a ligand contact to NAD(+); the sequence is GAKWDGVPYEARPE. Residues Arg97, Arg107, Arg135, and Asp226 each coordinate substrate. Positions 226, 250, and 254 each coordinate Mg(2+). An NAD(+)-binding site is contributed by 290–302; it reads GSAPDIAGKGLAN.

It belongs to the isocitrate and isopropylmalate dehydrogenases family. LeuB type 1 subfamily. Homodimer. The cofactor is Mg(2+). It depends on Mn(2+) as a cofactor.

It localises to the cytoplasm. The catalysed reaction is (2R,3S)-3-isopropylmalate + NAD(+) = 4-methyl-2-oxopentanoate + CO2 + NADH. The protein operates within amino-acid biosynthesis; L-leucine biosynthesis; L-leucine from 3-methyl-2-oxobutanoate: step 3/4. In terms of biological role, catalyzes the oxidation of 3-carboxy-2-hydroxy-4-methylpentanoate (3-isopropylmalate) to 3-carboxy-4-methyl-2-oxopentanoate. The product decarboxylates to 4-methyl-2 oxopentanoate. The chain is 3-isopropylmalate dehydrogenase from Rhodopseudomonas palustris (strain BisB18).